Consider the following 56-residue polypeptide: Bdellin B-3 (56 aa).

The 42-residue stretch at D1 to G42 folds into the Kazal-like domain. Disulfide bonds link C4–C29, C6–C25, and C14–C40.

Its function is as follows. Proteinase inhibitor. Blocks the activity of trypsin, plasmin and sperm acrosin. The chain is Bdellin B-3 from Hirudo medicinalis (Medicinal leech).